Here is a 157-residue protein sequence, read N- to C-terminus: UPF0262 protein Atu0536 (157 aa).

This sequence belongs to the UPF0262 family.

The sequence is that of UPF0262 protein Atu0536 from Agrobacterium fabrum (strain C58 / ATCC 33970) (Agrobacterium tumefaciens (strain C58)).